Reading from the N-terminus, the 121-residue chain is Small ribosomal subunit protein uS13 (121 aa).

The interval arginine 92–lysine 121 is disordered.

It belongs to the universal ribosomal protein uS13 family. Part of the 30S ribosomal subunit. Forms a loose heterodimer with protein S19. Forms two bridges to the 50S subunit in the 70S ribosome.

Its function is as follows. Located at the top of the head of the 30S subunit, it contacts several helices of the 16S rRNA. In the 70S ribosome it contacts the 23S rRNA (bridge B1a) and protein L5 of the 50S subunit (bridge B1b), connecting the 2 subunits; these bridges are implicated in subunit movement. Contacts the tRNAs in the A and P-sites. The sequence is that of Small ribosomal subunit protein uS13 from Polynucleobacter asymbioticus (strain DSM 18221 / CIP 109841 / QLW-P1DMWA-1) (Polynucleobacter necessarius subsp. asymbioticus).